The following is a 134-amino-acid chain: Small ribosomal subunit protein bS6 (134 aa).

Positions glutamate 99 to glycine 134 are disordered. Residues glutamine 105–glycine 134 are compositionally biased toward basic and acidic residues.

The protein belongs to the bacterial ribosomal protein bS6 family.

Its function is as follows. Binds together with bS18 to 16S ribosomal RNA. The polypeptide is Small ribosomal subunit protein bS6 (Methylobacterium sp. (strain 4-46)).